We begin with the raw amino-acid sequence, 179 residues long: UPF0302 protein BPUM_1989 (179 aa).

This sequence belongs to the UPF0302 family.

This is UPF0302 protein BPUM_1989 from Bacillus pumilus (strain SAFR-032).